The primary structure comprises 732 residues: Elongation factor 2 (732 aa).

The tr-type G domain maps to 19-230; sequence ERIRNMGIAA…VSFKDIVELT (212 aa). Residues 28–35, 94–98, and 148–151 contribute to the GTP site; these read AHIDHGKT, DTPGH, and NKVD. Histidine 597 is subject to Diphthamide.

Belongs to the TRAFAC class translation factor GTPase superfamily. Classic translation factor GTPase family. EF-G/EF-2 subfamily.

Its subcellular location is the cytoplasm. Catalyzes the GTP-dependent ribosomal translocation step during translation elongation. During this step, the ribosome changes from the pre-translocational (PRE) to the post-translocational (POST) state as the newly formed A-site-bound peptidyl-tRNA and P-site-bound deacylated tRNA move to the P and E sites, respectively. Catalyzes the coordinated movement of the two tRNA molecules, the mRNA and conformational changes in the ribosome. The protein is Elongation factor 2 of Thermococcus gammatolerans (strain DSM 15229 / JCM 11827 / EJ3).